Here is a 250-residue protein sequence, read N- to C-terminus: NADH-quinone oxidoreductase subunit C (250 aa).

Belongs to the complex I 30 kDa subunit family. NDH-1 is composed of 14 different subunits. Subunits NuoB, C, D, E, F, and G constitute the peripheral sector of the complex.

It is found in the cell inner membrane. It carries out the reaction a quinone + NADH + 5 H(+)(in) = a quinol + NAD(+) + 4 H(+)(out). In terms of biological role, NDH-1 shuttles electrons from NADH, via FMN and iron-sulfur (Fe-S) centers, to quinones in the respiratory chain. The immediate electron acceptor for the enzyme in this species is believed to be ubiquinone. Couples the redox reaction to proton translocation (for every two electrons transferred, four hydrogen ions are translocated across the cytoplasmic membrane), and thus conserves the redox energy in a proton gradient. The sequence is that of NADH-quinone oxidoreductase subunit C from Xanthomonas oryzae pv. oryzae (strain PXO99A).